A 375-amino-acid chain; its full sequence is MSCPVIELTQQLIRRPSLSPDDAGCQALMIERLRAIGFTVEHMDFGDTQNFWAWRGQGETLAFAGHTDVVPAGDVDRWINPPFEPTIRDGMLFGRGAADMKGSLAAMVVAAERFVAQHPDHQGRLAFLITSDEEASAKNGTVKVVETLMARNERLDYCLVGEPSSTEIVGDVVKNGRRGSLTCNLTIHGVQGHVAYPHLADNPVHRAAPMLNELVAIEWDQGNEFFPATSMQIANIQAGTGSNNVIPGELFIQFNFRFSTELTDETLKERVHALLDKHQLRYTVDWWLSGQPFLTARGKLVDAVVNAIEHYNEIKPQLLTTGGTSDGRFIARMGAQVVELGPVNATIHKINECVNAADLQLLARMYQRIMEQLVA.

H66 is a binding site for Zn(2+). D68 is an active-site residue. Position 99 (D99) interacts with Zn(2+). The active-site Proton acceptor is the E133. The Zn(2+) site is built by E134, E162, and H348.

Belongs to the peptidase M20A family. DapE subfamily. In terms of assembly, homodimer. The cofactor is Zn(2+). Co(2+) is required as a cofactor.

The catalysed reaction is N-succinyl-(2S,6S)-2,6-diaminopimelate + H2O = (2S,6S)-2,6-diaminopimelate + succinate. The protein operates within amino-acid biosynthesis; L-lysine biosynthesis via DAP pathway; LL-2,6-diaminopimelate from (S)-tetrahydrodipicolinate (succinylase route): step 3/3. Its function is as follows. Catalyzes the hydrolysis of N-succinyl-L,L-diaminopimelic acid (SDAP), forming succinate and LL-2,6-diaminopimelate (DAP), an intermediate involved in the bacterial biosynthesis of lysine and meso-diaminopimelic acid, an essential component of bacterial cell walls. The polypeptide is Succinyl-diaminopimelate desuccinylase (Citrobacter koseri (strain ATCC BAA-895 / CDC 4225-83 / SGSC4696)).